The sequence spans 326 residues: o-succinylbenzoate synthase (326 aa).

K110 serves as the catalytic Proton donor. Residues D138, E165, and D188 each coordinate Mg(2+). K212 (proton acceptor) is an active-site residue.

The protein belongs to the mandelate racemase/muconate lactonizing enzyme family. MenC type 1 subfamily. The cofactor is a divalent metal cation.

It carries out the reaction (1R,6R)-6-hydroxy-2-succinyl-cyclohexa-2,4-diene-1-carboxylate = 2-succinylbenzoate + H2O. Its pathway is quinol/quinone metabolism; 1,4-dihydroxy-2-naphthoate biosynthesis; 1,4-dihydroxy-2-naphthoate from chorismate: step 4/7. The protein operates within quinol/quinone metabolism; menaquinone biosynthesis. Functionally, converts 2-succinyl-6-hydroxy-2,4-cyclohexadiene-1-carboxylate (SHCHC) to 2-succinylbenzoate (OSB). This chain is o-succinylbenzoate synthase, found in Mycobacterium bovis (strain ATCC BAA-935 / AF2122/97).